Reading from the N-terminus, the 361-residue chain is GTP 3',8-cyclase (361 aa).

The tract at residues Met-1–Pro-30 is disordered. Over residues Gly-16–Pro-30 the composition is skewed to low complexity. Residues Thr-34–Asp-252 form the Radical SAM core domain. Arg-43 lines the GTP pocket. Positions 50 and 54 each coordinate [4Fe-4S] cluster. Tyr-56 is an S-adenosyl-L-methionine binding site. Cys-57 contacts [4Fe-4S] cluster. Residue Arg-94 coordinates GTP. Gly-98 provides a ligand contact to S-adenosyl-L-methionine. Thr-125 is a GTP binding site. Position 149 (Ser-149) interacts with S-adenosyl-L-methionine. Lys-186 provides a ligand contact to GTP. S-adenosyl-L-methionine is bound at residue Met-220. Positions 288 and 291 each coordinate [4Fe-4S] cluster. GTP is bound at residue Arg-293 to Arg-295. Cys-305 contacts [4Fe-4S] cluster.

The protein belongs to the radical SAM superfamily. MoaA family. Monomer and homodimer. [4Fe-4S] cluster is required as a cofactor.

It catalyses the reaction GTP + AH2 + S-adenosyl-L-methionine = (8S)-3',8-cyclo-7,8-dihydroguanosine 5'-triphosphate + 5'-deoxyadenosine + L-methionine + A + H(+). Its pathway is cofactor biosynthesis; molybdopterin biosynthesis. In terms of biological role, catalyzes the cyclization of GTP to (8S)-3',8-cyclo-7,8-dihydroguanosine 5'-triphosphate. The polypeptide is GTP 3',8-cyclase (Mycolicibacterium smegmatis (strain ATCC 700084 / mc(2)155) (Mycobacterium smegmatis)).